A 327-amino-acid chain; its full sequence is Cytochrome c biogenesis protein CcsA (327 aa).

Helical transmembrane passes span 13 to 33 (ISFS…LVNL), 46 to 66 (GIII…IYSG), 73 to 93 (LYES…VSYF), 101 to 121 (LNAI…SGLL), 145 to 165 (MILG…LLVI), 233 to 253 (IISL…VWAN), 262 to 282 (WDPK…YLHI), and 294 to 314 (AIVA…VNLL).

This sequence belongs to the CcmF/CycK/Ccl1/NrfE/CcsA family. In terms of assembly, may interact with Ccs1.

It localises to the plastid. Its subcellular location is the chloroplast thylakoid membrane. Functionally, required during biogenesis of c-type cytochromes (cytochrome c6 and cytochrome f) at the step of heme attachment. The sequence is that of Cytochrome c biogenesis protein CcsA from Lobularia maritima (Sweet alyssum).